The following is a 418-amino-acid chain: MDIGDFVKLKLENTTYSGTVMPSLNEDTIVIKMKSGYNVGIDKNKIKNIEILESGDKPKYGLPPLNLEKNPKLKNISILSTGGTVASRVDYKTGAVHPAFTADDLIMAVPELLDIANIKGKVILNILSENMLPKYWVMTAEAIKEEIENGAEGIVIAHGTDTMHYTASALSFMVNSEVPIILVGAQRSSDRPSSDAALNIISAVKAATEPIKGVYVLMHGETGDTVCHLHEGTKVRKLHSSRRDAFKSVNKTPFAEINPFTKEVKYLRDVKNQDKSKIKEIVLNTNLEEKVALIKVYPGIDSEILKFYVDKGYKGIILEGTGLGHTPETFFEGIDYANENNVLVAMTTQTINGRVNMNVYSNGRELQAKGVIPCEDMLSEVAFVKLMYLLGNYEIEDAKELMSKDIAGEINESINLEC.

Residues 74 to 405 (KNISILSTGG…EDAKELMSKD (332 aa)) form the Asparaginase/glutaminase domain. Catalysis depends on residues Thr-84, Thr-160, Asp-161, and Lys-237.

Belongs to the asparaginase 1 family. GatD subfamily. In terms of assembly, heterodimer of GatD and GatE.

It catalyses the reaction L-glutamyl-tRNA(Gln) + L-glutamine + ATP + H2O = L-glutaminyl-tRNA(Gln) + L-glutamate + ADP + phosphate + H(+). Allows the formation of correctly charged Gln-tRNA(Gln) through the transamidation of misacylated Glu-tRNA(Gln) in organisms which lack glutaminyl-tRNA synthetase. The reaction takes place in the presence of glutamine and ATP through an activated gamma-phospho-Glu-tRNA(Gln). The GatDE system is specific for glutamate and does not act on aspartate. This Methanococcus maripaludis (strain C7 / ATCC BAA-1331) protein is Glutamyl-tRNA(Gln) amidotransferase subunit D.